The following is a 233-amino-acid chain: Riboflavin kinase (233 aa).

The segment at 1 to 99 (MSGATSTGDV…YRRIFEDPGE (99 aa)) is unknown. The interval 100–233 (LALAGTVTSG…DDEVTIRVEA (134 aa)) is riboflavin kinase. A CDP-binding site is contributed by 109-114 (GMGEGR). Thr-138 and Asn-140 together coordinate Mg(2+). Positions 200 and 208 each coordinate FMN. Position 213–216 (213–216 (VKLR)) interacts with CDP.

Belongs to the archaeal riboflavin kinase family. The cofactor is Mg(2+).

The enzyme catalyses riboflavin + CTP = CDP + FMN + H(+). It functions in the pathway cofactor biosynthesis; FMN biosynthesis; FMN from riboflavin (CTP route): step 1/1. Catalyzes the CTP-dependent phosphorylation of riboflavin (vitamin B2) to form flavin mononucleotide (FMN). The chain is Riboflavin kinase (ribK) from Halobacterium salinarum (strain ATCC 700922 / JCM 11081 / NRC-1) (Halobacterium halobium).